The chain runs to 307 residues: UPF0276 protein PM0211 (307 aa).

The protein belongs to the UPF0276 family.

The polypeptide is UPF0276 protein PM0211 (Pasteurella multocida (strain Pm70)).